A 365-amino-acid chain; its full sequence is Histidinol-phosphate aminotransferase (365 aa).

The interval 1-22 (MSRPVPNPGILDIAPYTPGKSP) is disordered. N6-(pyridoxal phosphate)lysine is present on lysine 221.

It belongs to the class-II pyridoxal-phosphate-dependent aminotransferase family. Histidinol-phosphate aminotransferase subfamily. Homodimer. Pyridoxal 5'-phosphate is required as a cofactor.

It catalyses the reaction L-histidinol phosphate + 2-oxoglutarate = 3-(imidazol-4-yl)-2-oxopropyl phosphate + L-glutamate. It participates in amino-acid biosynthesis; L-histidine biosynthesis; L-histidine from 5-phospho-alpha-D-ribose 1-diphosphate: step 7/9. The sequence is that of Histidinol-phosphate aminotransferase from Rhodopseudomonas palustris (strain BisA53).